A 623-amino-acid polypeptide reads, in one-letter code: uncharacterized protein (623 aa).

Positions 256–351 form a coiled coil; sequence AEEKLLSKNK…EEIHGLKKKN (96 aa). Disordered regions lie at residues 417-485 and 497-536; these read NRRN…SPSS and ALSSNGKKKTTRAIEDEEEEEDVKPENSNNNKKPENECAT. The segment covering 422-431 has biased composition (polar residues); it reads LESVPFNTLS. Basic and acidic residues predominate over residues 452 to 481; that stretch reads ELKKPAESYGDETKKPNQHNKDGSIDEKPK.

This is an uncharacterized protein from Arabidopsis thaliana (Mouse-ear cress).